The sequence spans 182 residues: Ribosome maturation factor RimM (182 aa).

Residues 103–182 (VGDYYWKDLI…TIEVDWDPGF (80 aa)) form the PRC barrel domain.

Belongs to the RimM family. As to quaternary structure, binds ribosomal protein uS19.

The protein localises to the cytoplasm. Functionally, an accessory protein needed during the final step in the assembly of 30S ribosomal subunit, possibly for assembly of the head region. Essential for efficient processing of 16S rRNA. May be needed both before and after RbfA during the maturation of 16S rRNA. It has affinity for free ribosomal 30S subunits but not for 70S ribosomes. The protein is Ribosome maturation factor RimM of Pectobacterium atrosepticum (strain SCRI 1043 / ATCC BAA-672) (Erwinia carotovora subsp. atroseptica).